The primary structure comprises 207 residues: Outer-membrane lipoprotein LolB (207 aa).

Positions 1–21 (MPQRKISFYRLLPLATLLLAA) are cleaved as a signal peptide. The N-palmitoyl cysteine moiety is linked to residue Cys22. Cys22 carries the S-diacylglycerol cysteine lipid modification.

It belongs to the LolB family. Monomer.

The protein localises to the cell outer membrane. In terms of biological role, plays a critical role in the incorporation of lipoproteins in the outer membrane after they are released by the LolA protein. This chain is Outer-membrane lipoprotein LolB, found in Yersinia enterocolitica serotype O:8 / biotype 1B (strain NCTC 13174 / 8081).